A 118-amino-acid chain; its full sequence is Aspartate 1-decarboxylase (118 aa).

S25 acts as the Schiff-base intermediate with substrate; via pyruvic acid in catalysis. S25 is modified (pyruvic acid (Ser)). T57 provides a ligand contact to substrate. The Proton donor role is filled by Y58. 73–75 (GAA) is a substrate binding site.

Belongs to the PanD family. In terms of assembly, heterooctamer of four alpha and four beta subunits. It depends on pyruvate as a cofactor. In terms of processing, is synthesized initially as an inactive proenzyme, which is activated by self-cleavage at a specific serine bond to produce a beta-subunit with a hydroxyl group at its C-terminus and an alpha-subunit with a pyruvoyl group at its N-terminus.

It is found in the cytoplasm. The enzyme catalyses L-aspartate + H(+) = beta-alanine + CO2. It participates in cofactor biosynthesis; (R)-pantothenate biosynthesis; beta-alanine from L-aspartate: step 1/1. Its function is as follows. Catalyzes the pyruvoyl-dependent decarboxylation of aspartate to produce beta-alanine. This Syntrophomonas wolfei subsp. wolfei (strain DSM 2245B / Goettingen) protein is Aspartate 1-decarboxylase.